The primary structure comprises 624 residues: (-)-beta-phellandrene synthase 2, chloroplastic (624 aa).

The N-terminal 47 residues, 1–47, are a transit peptide targeting the chloroplast; the sequence is MALVSVAPLVSMRRSLFSSPYELKSIDKTIPNLVMCRKRMLGRPSIR. 3 residues coordinate Mg(2+): Asp375, Asp379, and Asp527. Residues 375 to 379 carry the DDXXD motif motif; that stretch reads DDIYD.

This sequence belongs to the terpene synthase family. Tpsd subfamily. Requires Mg(2+) as cofactor. The cofactor is Mn(2+).

It localises to the plastid. It is found in the chloroplast. It carries out the reaction (2E)-geranyl diphosphate = (-)-beta-phellandrene + diphosphate. The protein operates within terpene metabolism; oleoresin biosynthesis. Its pathway is secondary metabolite biosynthesis; terpenoid biosynthesis. Monoterpene synthase (TPS) involved in the biosynthesis of monoterpene natural products included in conifer oleoresin secretions and volatile emissions; these compounds contribute to biotic and abiotic stress defense against herbivores and pathogens. Catalyzes the conversion of (2E)-geranyl diphosphate (GPP) to (-)-beta-phellandrene. This chain is (-)-beta-phellandrene synthase 2, chloroplastic, found in Pinus contorta (Shore pine).